We begin with the raw amino-acid sequence, 60 residues long: Large ribosomal subunit protein bL33 (60 aa).

It belongs to the bacterial ribosomal protein bL33 family.

This chain is Large ribosomal subunit protein bL33, found in Chlorobium chlorochromatii (strain CaD3).